The following is a 133-amino-acid chain: uncharacterized protein (133 aa).

Positions 3–106 (IFTKIINREL…PTRSLSDFGF (104 aa)) constitute an HIT domain. A Histidine triad motif motif is present at residues 90–94 (HLHIH).

This is an uncharacterized protein from Mycobacterium tuberculosis (strain ATCC 25618 / H37Rv).